The sequence spans 299 residues: Ribosomal protein L11 methyltransferase (299 aa).

S-adenosyl-L-methionine-binding residues include T139, G166, D188, and N231.

The protein belongs to the methyltransferase superfamily. PrmA family.

It localises to the cytoplasm. The catalysed reaction is L-lysyl-[protein] + 3 S-adenosyl-L-methionine = N(6),N(6),N(6)-trimethyl-L-lysyl-[protein] + 3 S-adenosyl-L-homocysteine + 3 H(+). Methylates ribosomal protein L11. The polypeptide is Ribosomal protein L11 methyltransferase (Thermosynechococcus vestitus (strain NIES-2133 / IAM M-273 / BP-1)).